We begin with the raw amino-acid sequence, 214 residues long: Adenylate kinase (214 aa).

10 to 15 is a binding site for ATP; the sequence is GAGKGT. The segment at 30–59 is NMP; sequence STGDMFRDHKARGTEIGKQVQAIMDGGGLV. AMP-binding positions include T31, R36, 57–59, 85–88, and Q92; these read GLV and GYPR. Residues 126–163 form an LID region; sequence GRRSCPRCGAVYHVSQNPPRRAGYCDRDDAELVQREDD. Position 127 (R127) interacts with ATP. Zn(2+) is bound by residues C130 and C133. 136–137 contacts ATP; the sequence is VY. 2 residues coordinate Zn(2+): C150 and D153. R160 and R171 together coordinate AMP. Residue G199 participates in ATP binding.

The protein belongs to the adenylate kinase family. Monomer.

Its subcellular location is the cytoplasm. The catalysed reaction is AMP + ATP = 2 ADP. The protein operates within purine metabolism; AMP biosynthesis via salvage pathway; AMP from ADP: step 1/1. Its function is as follows. Catalyzes the reversible transfer of the terminal phosphate group between ATP and AMP. Plays an important role in cellular energy homeostasis and in adenine nucleotide metabolism. This is Adenylate kinase from Anaeromyxobacter dehalogenans (strain 2CP-C).